The chain runs to 355 residues: Guanine nucleotide-binding protein alpha-2 subunit (355 aa).

Residues 1–20 (MCFGGRGKDDEAEASRSREL) form a disordered region. Positions 33-355 (KEVKLLLLGA…IQRNLKQLIL (323 aa)) constitute a G-alpha domain. The interval 36-49 (KLLLLGAGESGKST) is G1 motif. Residues Glu-44, Ser-45, Gly-46, Lys-47, Ser-48, Thr-49, Asp-151, Leu-176, Thr-182, Gly-204, Asn-270, Lys-271, Asp-273, and Ala-328 each contribute to the GTP site. Ser-48 contacts Mg(2+). The G2 motif stretch occupies residues 174–182 (DLLRSRLRT). Thr-182 lines the Mg(2+) pocket. The segment at 197 to 206 (YRMFDVGGQR) is G3 motif. The tract at residues 266–273 (ILFLNKID) is G4 motif. The interval 326–331 (TNATDT) is G5 motif.

The protein belongs to the G-alpha family. G(q) subfamily. G proteins are composed of 3 units; alpha, beta and gamma. The alpha chain contains the guanine nucleotide binding site. Requires Mg(2+) as cofactor.

Its function is as follows. Guanine nucleotide-binding proteins (G proteins) are involved as modulators or transducers in various transmembrane signaling systems. The polypeptide is Guanine nucleotide-binding protein alpha-2 subunit (gna-2) (Neurospora crassa (strain ATCC 24698 / 74-OR23-1A / CBS 708.71 / DSM 1257 / FGSC 987)).